We begin with the raw amino-acid sequence, 529 residues long: DEP domain-containing protein 1B (529 aa).

The DEP domain occupies F24 to P108. S160 is subject to Phosphoserine. Residues D201–L393 form the Rho-GAP domain. The residue at position 436 (S436) is a Phosphoserine.

In Homo sapiens (Human), this protein is DEP domain-containing protein 1B (DEPDC1B).